The following is a 159-amino-acid chain: C-type lectin BJcuL (159 aa).

The N-terminal stretch at 1–24 (MGRFLFVASSACWFVFLSLSGAKG) is a signal peptide. Cystine bridges form between Cys27/Cys38, Cys55/Cys155, Cys62/Cys157, and Cys130/Cys147. The region spanning 34–156 (MNGLCYKIFN…CESKNAFLCQ (123 aa)) is the C-type lectin domain. Ca(2+)-binding residues include Gln120, Asp122, Glu128, Asn143, and Asp144. The Galactose-binding signature appears at 120 to 122 (QPD).

The protein belongs to the true venom lectin family. As to quaternary structure, homodecamer of disulfide-linked dimers arranged in two 5-fold symmetric pentamers. Binds the gentamicin group of aminoglycoside antibiotics at the dimeric interface near the intermolecular disulfide bond. Expressed by the venom gland.

It localises to the secreted. Its activity is regulated as follows. Hemagglutination activity is inhibited by lactose (MIC=2.5 mM), galactose (MIC=10 mM), and raffinose. Is very weakly or not inhibited by gentamicin, kanamycin, glucose and sucrose. Its function is as follows. Galactose-binding lectin which recognizes specific carbohydrate structures and agglutinates a variety of animal cells by binding to cell-surface glycoproteins and glycolipids. Calcium-dependent lectin. Also binds lactose and raffinose. Shows high hemagglutinating activity on mammalian erythrocytes. It also involved in immunological functions, since it is able of inducing potent neutrophil activation. In vivo, it causes edema and increases vascular permeability after injection into mouse hind paws (10-100 ug/paw). In anesthetized rats, it decreases the blood pressure by approximately 15%, with a rapid return to the resting level. Is an effective inhibitor of cell growth in some cancer cell lines, especially against renal and pancreatic cancer cell lines, human breast and ovarian carcinoma, glioblastoma and a bovine brain microvascular endothelial cell line. This chain is C-type lectin BJcuL, found in Bothrops jararacussu (Jararacussu).